Here is a 520-residue protein sequence, read N- to C-terminus: Cytochrome P450 monooxygenase vrtE (520 aa).

A helical transmembrane segment spans residues 16-36 (ALSLLHYVLGAIFLLLLFHML). N-linked (GlcNAc...) asparagine glycosylation occurs at asparagine 137. Residue cysteine 459 coordinates heme.

The protein belongs to the cytochrome P450 family. Heme is required as a cofactor.

The protein localises to the membrane. Its pathway is secondary metabolite biosynthesis; terpenoid biosynthesis. Functionally, cytochrome P450 monooxygenase; part of the gene cluster that mediates the biosynthesis of viridicatumtoxin, a tetracycline-like fungal meroterpenoid with a unique, fused spirobicyclic ring system. The first step of the pathway is the production of the malonamoyl-CoA starter unit for the polyketide synthase vrtA. The aldolase vrtJ may be involved in the synthesis of the malonamate substrate for malonamoyl-CoA synthetase vrtB. The polyketide synthase vrtA then may utilize the malonamoyl-CoA starter unit, followed by sequential condensation of eight malonyl-CoA units to form the polyketide backbone. The cyclization of the last ring could be mediated by the lactamase-like protein vrtG. The proposed post-PKS tailoring steps are a hydroxylation at C5 catalyzed the cytochrome P450 monooxygenase vrtE, a hydroxylation at C12a catalyzed by VrtH and/or VrtI, and an O-methylation by the O-methyltransferase vrtF. VrtC is then proposed to catalyze the transfer of a geranyl group synthesized by vrtD to the aromatic C ring of the tetracyclic polyketide intermediate of viridicatumtoxin to yield previridicatumtoxin. Finally, the cytochrome P450 monooxygenase vrtK catalyzes the spirocyclization of the geranyl moiety of previridicatumtoxin to afford viridicatumtoxin. This is Cytochrome P450 monooxygenase vrtE from Penicillium aethiopicum.